Here is a 141-residue protein sequence, read N- to C-terminus: NADH dehydrogenase [ubiquinone] 1 alpha subcomplex subunit 11 (141 aa).

At Ala2 the chain carries N-acetylalanine. The next 2 helical transmembrane spans lie at 21 to 43 and 58 to 80; these read KAYSTTSIASVAGLTAAAYRVTL and QYTFTAAAVGAVFGLTTCISAHV.

The protein belongs to the complex I NDUFA11 subunit family. Complex I is composed of 45 different subunits.

The protein localises to the mitochondrion inner membrane. Its function is as follows. Accessory subunit of the mitochondrial membrane respiratory chain NADH dehydrogenase (Complex I), that is believed not to be involved in catalysis. Complex I functions in the transfer of electrons from NADH to the respiratory chain. The immediate electron acceptor for the enzyme is believed to be ubiquinone. The polypeptide is NADH dehydrogenase [ubiquinone] 1 alpha subcomplex subunit 11 (NDUFA11) (Homo sapiens (Human)).